A 61-amino-acid polypeptide reads, in one-letter code: Small ribosomal subunit protein uS14B (61 aa).

Positions 24, 27, 40, and 43 each coordinate Zn(2+).

The protein belongs to the universal ribosomal protein uS14 family. Zinc-binding uS14 subfamily. In terms of assembly, part of the 30S ribosomal subunit. Contacts proteins S3 and S10. Requires Zn(2+) as cofactor.

Binds 16S rRNA, required for the assembly of 30S particles and may also be responsible for determining the conformation of the 16S rRNA at the A site. The chain is Small ribosomal subunit protein uS14B from Nocardia farcinica (strain IFM 10152).